The chain runs to 379 residues: Chaperone protein DnaJ (379 aa).

The region spanning 5–70 is the J domain; that stretch reads DYYEVLGVAK…QKRAAYDQYG (66 aa). A CR-type zinc finger spans residues 139 to 217; that stretch reads GYDTQIRVPS…CHGAGKVKET (79 aa). 8 residues coordinate Zn(2+): C152, C155, C169, C172, C191, C194, C205, and C208. CXXCXGXG motif repeat units follow at residues 152–159, 169–176, 191–198, and 205–212; these read CEICHGSG, CPTCSGSG, CPKCHGTG, and CGHCHGAG.

It belongs to the DnaJ family. Homodimer. Zn(2+) serves as cofactor.

The protein localises to the cytoplasm. Its function is as follows. Participates actively in the response to hyperosmotic and heat shock by preventing the aggregation of stress-denatured proteins and by disaggregating proteins, also in an autonomous, DnaK-independent fashion. Unfolded proteins bind initially to DnaJ; upon interaction with the DnaJ-bound protein, DnaK hydrolyzes its bound ATP, resulting in the formation of a stable complex. GrpE releases ADP from DnaK; ATP binding to DnaK triggers the release of the substrate protein, thus completing the reaction cycle. Several rounds of ATP-dependent interactions between DnaJ, DnaK and GrpE are required for fully efficient folding. Also involved, together with DnaK and GrpE, in the DNA replication of plasmids through activation of initiation proteins. The chain is Chaperone protein DnaJ from Paraburkholderia phytofirmans (strain DSM 17436 / LMG 22146 / PsJN) (Burkholderia phytofirmans).